A 256-amino-acid polypeptide reads, in one-letter code: Thiazole synthase (256 aa).

K91 functions as the Schiff-base intermediate with DXP in the catalytic mechanism. 1-deoxy-D-xylulose 5-phosphate contacts are provided by residues G152, 179–180 (AG), and 201–202 (NT).

The protein belongs to the ThiG family. As to quaternary structure, homotetramer. Forms heterodimers with either ThiH or ThiS.

Its subcellular location is the cytoplasm. The catalysed reaction is [ThiS sulfur-carrier protein]-C-terminal-Gly-aminoethanethioate + 2-iminoacetate + 1-deoxy-D-xylulose 5-phosphate = [ThiS sulfur-carrier protein]-C-terminal Gly-Gly + 2-[(2R,5Z)-2-carboxy-4-methylthiazol-5(2H)-ylidene]ethyl phosphate + 2 H2O + H(+). The protein operates within cofactor biosynthesis; thiamine diphosphate biosynthesis. Its function is as follows. Catalyzes the rearrangement of 1-deoxy-D-xylulose 5-phosphate (DXP) to produce the thiazole phosphate moiety of thiamine. Sulfur is provided by the thiocarboxylate moiety of the carrier protein ThiS. In vitro, sulfur can be provided by H(2)S. The sequence is that of Thiazole synthase from Erwinia tasmaniensis (strain DSM 17950 / CFBP 7177 / CIP 109463 / NCPPB 4357 / Et1/99).